Consider the following 965-residue polypeptide: Phosphatidylethanolamine N-methyltransferase (965 aa).

Residues 1 to 82 (MDRGLSTGTN…SPSEPKNLSD (82 aa)) lie on the Lumenal side of the membrane. The disordered stretch occupies residues 34 to 54 (PTVTNASNGKDKAGKTFGRTP). A helical membrane pass occupies residues 83–103 (LVVLTILAGHIFLLWILPSGA). The Cytoplasmic portion of the chain corresponds to 104 to 106 (KIP). Residues 107–127 (VFAVIYLFWRSCYNAGIGWLL) form a helical membrane-spanning segment. Over 128–192 (HNQSHHKTLV…EYNTWLVFRR (65 aa)) the chain is Lumenal. Residues 193–213 (LVDLILMCDFASYCLFAIACS) form a helical membrane-spanning segment. The Cytoplasmic segment spans residues 214–220 (RHPANES). A helical membrane pass occupies residues 221 to 241 (VLMTVIRWTSGIALVLFNLWV). Residues 242–274 (KLDAHRVVKDYAWYWGDFFYLIDQELTFDGVFE) lie on the Lumenal side of the membrane. A helical membrane pass occupies residues 275-295 (MAPHPMYSVGYAGYYGISLMA). The Cytoplasmic segment spans residues 296–297 (AS). Residues 298–318 (YKVLFISIIAHAAQFAFLVLV) traverse the membrane as a helical segment. The Lumenal portion of the chain corresponds to 319–394 (ENPHIDKTYN…LDLHRITDTS (76 aa)). Residues 326-368 (TYNPPPPRKRTITEHDAASQRSQSPDTPNAPSVSEENVPNATT) are disordered. Positions 344-368 (SQRSQSPDTPNAPSVSEENVPNATT) are enriched in polar residues. Residues 395 to 415 (SILVQFLMFSLTVLTPSTPWY) traverse the membrane as a helical segment. A topological domain (cytoplasmic) is located at residue glutamine 416. A helical transmembrane segment spans residues 417 to 437 (FLFVANAAIWRLWYSVGIGYL). The Lumenal segment spans residues 438-470 (LNRQSNCKSWTRHFVKYGETPHEAWNQWKGTYH). A helical membrane pass occupies residues 471 to 491 (LSMVMCYASFISAVWKMYTLP). The Cytoplasmic portion of the chain corresponds to 492 to 503 (SNWGYGLAILRH). A helical transmembrane segment spans residues 504 to 524 (VLGAGLISLQIWTSVSIYESL). Topologically, residues 525–559 (GEFGWFYGDFFFDESPKLTYNGIYRFLNNPERVLG) are lumenal. The helical transmembrane segment at 560-580 (LAGVWGAVLITASGTVAFLAF) threads the bilayer. Topologically, residues 581-965 (LSHILSLGFI…GATTPTESKE (385 aa)) are cytoplasmic.

The protein belongs to the class VI-like SAM-binding methyltransferase superfamily. CHO2 family.

Its subcellular location is the endoplasmic reticulum membrane. The catalysed reaction is a 1,2-diacyl-sn-glycero-3-phosphoethanolamine + S-adenosyl-L-methionine = a 1,2-diacyl-sn-glycero-3-phospho-N-methylethanolamine + S-adenosyl-L-homocysteine + H(+). Its pathway is phospholipid metabolism; phosphatidylcholine biosynthesis. In terms of biological role, catalyzes the first step of the methylation pathway of phosphatidylcholine biosynthesis, the SAM-dependent methylation of phosphatidylethanolamine (PE) to phosphatidylmonomethylethanolamine (PMME). This Emericella nidulans (strain FGSC A4 / ATCC 38163 / CBS 112.46 / NRRL 194 / M139) (Aspergillus nidulans) protein is Phosphatidylethanolamine N-methyltransferase.